Reading from the N-terminus, the 950-residue chain is Synaptotagmin-like protein 2 (950 aa).

The RabBD domain occupies 1 to 57; that stretch reads MIDLSFLTEEEQDAILKVLQRDAALKRAEEERVRHLPEKIKDDQQLKNMSGQWFYEA. 3 disordered regions span residues 78-98, 116-289, and 361-620; these read RKKL…AKES, VEEP…ETLR, and ESDQ…SSSG. The segment covering 87–97 has biased composition (basic and acidic residues); it reads QNKDTAMRAKE. Composition is skewed to polar residues over residues 140-150 and 173-183; these read IDMSQESTRTP and LQQTKPEQSKT. Over residues 193–205 the composition is skewed to basic and acidic residues; sequence KEGELSESKEKSS. A compositionally biased stretch (polar residues) spans 219–230; it reads QTVSTEPENASH. The segment covering 246 to 264 has biased composition (basic and acidic residues); the sequence is NDLEKDDNQSFPRQRRDSL. Over residues 434–445 the composition is skewed to polar residues; sequence VESSSVINGQQE. Basic and acidic residues-rich tracts occupy residues 479-502 and 531-544; these read HSFR…LERR and ELVR…KADQ. A compositionally biased stretch (polar residues) spans 557–567; sequence TVPSLPDNQFS. Low complexity predominate over residues 608–620; that stretch reads SPSSLTNLSSSSG. 2 consecutive C2 domains span residues 644-769 and 784-913; these read VKGS…LKWY and NRGE…VDWM.

Monomer. Binds NRXN1. Binds RAB27A that has been activated by GTP-binding. Interacts with RAB27B. In terms of processing, isoform 1 is highly susceptible to proteolytic degradation and is stabilized by the interaction with RAB27A. Highly expressed in brain, lung, kidney, testis and in embryos after day 7. Detected at lower levels in skeletal muscle. Expressed in pancreatic alpha cells. Isoform 6 is highly expressed in brain, but not detectable in the other tissues tested. Isoform 1 is expressed abundantly in the stomach and is predominantly localized at the apical region of gastric-surface mucus cells. Isoform 11 is expressed in cytotoxic T-lymphocytes (CTL).

It localises to the melanosome membrane. The protein resides in the cell membrane. In terms of biological role, isoform 11 acts as a RAB27A effector protein and plays a role in cytotoxic granule exocytosis in lymphocytes. Required for cytotoxic granule docking at the immunologic synapse. Isoform 1 may play a role in melanosome transport and vesicle trafficking. It controls melanosome distribution in the cell periphery and regulates melanocyte morphology. Isoform 1 acts as a positive mediator of mucus secretion by the surface mucus cells of the stomach. Mediates basal mucus secretion by gastric surface cells by promoting the proper granule biognesis and docking of mucus granules with the apical plasma membrane. This chain is Synaptotagmin-like protein 2 (Sytl2), found in Mus musculus (Mouse).